Consider the following 87-residue polypeptide: U3-theraphotoxin-Hhn1a 15 (87 aa).

Positions 1 to 24 are cleaved as a signal peptide; that stretch reads MVNMKASMFLTFAGLVLLLVVCYA. Residues 25–52 constitute a propeptide that is removed on maturation; sequence SESEEKEFPKEMLSSIFAVDNDFKQEER. 3 disulfide bridges follow: C54/C67, C61/C72, and C66/C79.

It belongs to the neurotoxin 10 (Hwtx-1) family. 51 (Hntx-8) subfamily. Hntx-8 sub-subfamily. As to expression, expressed by the venom gland.

It localises to the secreted. In terms of biological role, ion channel inhibitor. The sequence is that of U3-theraphotoxin-Hhn1a 15 from Cyriopagopus hainanus (Chinese bird spider).